We begin with the raw amino-acid sequence, 185 residues long: Large ribosomal subunit protein uL18 (185 aa).

This sequence belongs to the universal ribosomal protein uL18 family. Part of the 50S ribosomal subunit. Contacts the 5S and 23S rRNAs.

Functionally, this is one of the proteins that bind and probably mediate the attachment of the 5S RNA into the large ribosomal subunit, where it forms part of the central protuberance. The polypeptide is Large ribosomal subunit protein uL18 (Halorubrum lacusprofundi (strain ATCC 49239 / DSM 5036 / JCM 8891 / ACAM 34)).